The following is a 3132-amino-acid chain: Enniatin synthetase (3132 aa).

A condensation 1 region spans residues 53-466 (ADDKQRAVGH…VEKVDMMTQE (414 aa)). The interval 186 to 212 (NDEHPRQFETPDSSQATPEEDLQPNPS) is disordered. The adenylation 1 stretch occupies residues 495 to 887 (SQSPNKAAVA…GRMDSQVKIR (393 aa)). The segment at 994–1013 (SQKTHSTPSQQSQAAISSGT) is disordered. In terms of domain architecture, Carrier 1 spans 1010–1086 (SSGTDTETKL…GLKAIVIGTS (77 aa)). Ser-1047 is subject to O-(pantetheine 4'-phosphoryl)serine. Residues 1105–1534 (SYAQNRMWFL…ETCISVLPLT (430 aa)) form a condensation 2 region. Residues 1563–1960 (FREQAAANPE…GRMDNQFKIR (398 aa)) are adenylation 2. The S-adenosyl-L-methionine-dependent N-methyltransferase stretch occupies residues 2021 to 2177 (EGWQDHFESG…YLAEVIDGLI (157 aa)). Carrier domains follow at residues 2504-2578 (FPIS…RQGL) and 2598-2672 (APRT…ESSH). O-(pantetheine 4'-phosphoryl)serine is present on residues Ser-2538 and Ser-2632. Residues 2719–3124 (QDVYPSTQMQ…RHVLEEVCKT (406 aa)) form a condensation 3 region.

The protein belongs to the NRP synthetase family. The cofactor is pantetheine 4'-phosphate.

It functions in the pathway antibiotic biosynthesis; enniatin biosynthesis. In terms of biological role, nonribosomal peptide synthetase that synthesizes enniatin by coupling three D-hydroxycarboxylic acids and three L-amino acids via amide and ester bonds in an alternating fashion. Whereas ESYN1 can accept different amino acids as precursors (L-valine, L-isoleucine or L-leucine), only one species of D-hydroxycarboxylic acid can be found in natural enniatin isolates (D-hydroxyisovaleric acid, D-Hiv). D-Hiv stems from L-valine deanimation by a valine aminotransferase to 2-keto-isovaleric acid (2-Kiv), which becomes subsequently reduced by a keto-isovaleric acid reductase (KivR) to D-Hiv. This Fusarium oxysporum (Fusarium vascular wilt) protein is Enniatin synthetase.